We begin with the raw amino-acid sequence, 430 residues long: Ribosomal protein uS12 methylthiotransferase RimO (430 aa).

The MTTase N-terminal domain maps to 1–116 (MRVGIKVLGC…IANALEKGTD (116 aa)). [4Fe-4S] cluster is bound by residues Cys-10, Cys-46, Cys-79, Cys-148, Cys-152, and Cys-155. Residues 134–365 (LEERPYAYVK…LLQAEISNSR (232 aa)) form the Radical SAM core domain. In terms of domain architecture, TRAM spans 367–430 (DRFIGRKLKF…DEYDMWGSVT (64 aa)).

This sequence belongs to the methylthiotransferase family. RimO subfamily. It depends on [4Fe-4S] cluster as a cofactor.

It is found in the cytoplasm. It catalyses the reaction L-aspartate(89)-[ribosomal protein uS12]-hydrogen + (sulfur carrier)-SH + AH2 + 2 S-adenosyl-L-methionine = 3-methylsulfanyl-L-aspartate(89)-[ribosomal protein uS12]-hydrogen + (sulfur carrier)-H + 5'-deoxyadenosine + L-methionine + A + S-adenosyl-L-homocysteine + 2 H(+). Functionally, catalyzes the methylthiolation of an aspartic acid residue of ribosomal protein uS12. The protein is Ribosomal protein uS12 methylthiotransferase RimO of Thermotoga sp. (strain RQ2).